Reading from the N-terminus, the 601-residue chain is MIIARKKLQLQRLWRQRGCRVATYICLGVLVLFGFVYNSKGNSMSSIKSDSAAQQFDDLDDLTNKELPGGPDPNTIFRGSELGNYEPKEPEIPSNQPGEHGKPVPVTDEEGMAAGRAAEKEFGFNTYVSDMISMNRTIPDIRPEECKHWDYPEKLPTVSVVVVFHNEGWTPLLRTVHSVLLRSPPELIEQVVMVDDDSDKPHLKEKLDKYVTRFNGKVIVVRTEQREGLINARSIGAKHSTGEVVLFLDAHCEVNTNWLPPLLAPIKRNRKVMTVPVIDGIDSNSWEYRSVYGSPNAHHSGIFEWGLLYKETQITERETAHRKHNSQPFRSPTHAGGLFAINRLWFKELGYYDEGLQIWGGEQYELSFKIWQCGGGIVFVPCSHVGHVYRSHMPYSFGKFSGKPVISINMMRVVKTWMDDYSKYYLTREPQATNVNPGDISAQLALRDKLQCKSFKWYMENVAYDVLKSYPMLPPNDVWGEARNPATGKCLDRMGGIPGPMGATGCHGYGGNQLIRLNVQGQMAQGEWCLTANGIRIQANHCVKGTVNGFWSYDRKTKQIIHSQKRQCITVSESGSEVTLQTCTEDNERQKFVWKEFYQSS.

Residues 1–20 are Cytoplasmic-facing; sequence MIIARKKLQLQRLWRQRGCR. Residues 21–38 traverse the membrane as a helical; Signal-anchor for type II membrane protein segment; sequence VATYICLGVLVLFGFVYN. The Lumenal portion of the chain corresponds to 39-601; that stretch reads SKGNSMSSIK…FVWKEFYQSS (563 aa). Residues 61–108 form a disordered region; it reads DLTNKELPGGPDPNTIFRGSELGNYEPKEPEIPSNQPGEHGKPVPVTD. A glycan (N-linked (GlcNAc...) asparagine) is linked at asparagine 135. Intrachain disulfides connect cysteine 146-cysteine 382, cysteine 373-cysteine 452, cysteine 490-cysteine 506, cysteine 529-cysteine 542, and cysteine 568-cysteine 583. The tract at residues 155–265 is catalytic subdomain A; that stretch reads LPTVSVVVVF…TNWLPPLLAP (111 aa). Substrate contacts are provided by aspartate 196 and arginine 226. Mn(2+) contacts are provided by aspartate 249 and histidine 251. The segment at 328–390 is catalytic subdomain B; that stretch reads PFRSPTHAGG…PCSHVGHVYR (63 aa). Tryptophan 359 serves as a coordination point for substrate. Residue histidine 387 participates in Mn(2+) binding. The substrate site is built by arginine 390 and tyrosine 395. One can recognise a Ricin B-type lectin domain in the interval 477 to 595; the sequence is DVWGEARNPA…DNERQKFVWK (119 aa).

This sequence belongs to the glycosyltransferase 2 family. GalNAc-T subfamily. It depends on Mn(2+) as a cofactor.

The protein localises to the golgi apparatus membrane. Its pathway is protein modification; protein glycosylation. Its function is as follows. Probable glycopeptide transferase involved in O-linked oligosaccharide biosynthesis. Glycopeptide transferases catalyze the transfer of an N-acetyl-D-galactosamine residue to an already glycosylated peptide. In contrast to other members of the family, it does not act as a peptide transferase that transfers GalNAc onto serine or threonine residue on peptides that have been tested. Some peptide transferase activity is however not excluded, considering that its appropriate peptide substrate may remain unidentified. The sequence is that of Probable N-acetylgalactosaminyltransferase 7 (gly-7) from Caenorhabditis elegans.